Here is a 314-residue protein sequence, read N- to C-terminus: uncharacterized protein (314 aa).

Residues 39 to 146 (QENVDSDSTD…SDYSSDESNS (108 aa)) are disordered. Residues 56–76 (STKNVSRNIPKNIPKSISKNI) show a composition bias toward polar residues. Residues 88 to 131 (IPKNVSKNIPKNVPKNVSKNIPKNIPKNVPNKSRNKYSNYSEDS) are compositionally biased toward low complexity. Positions 132 to 141 (NYSEDSDYSS) are enriched in acidic residues.

This is an uncharacterized protein from Acanthamoeba polyphaga mimivirus (APMV).